A 916-amino-acid chain; its full sequence is DNA topoisomerase 1 alpha (916 aa).

Residues 1-369 (MGTETVSKPV…SSPSSGDGQK (369 aa)) are disordered. Positions 34 to 47 (SNSNQSKSNSQRSK) are enriched in low complexity. Positions 60–76 (PVTSPNGTTPSNKTSIV) are enriched in polar residues. Positions 77–93 (KSSMPSSSSKASPAKSP) are enriched in low complexity. The span at 102–119 (VKDRSQLQKDQSECKIEH) shows a compositional bias: basic and acidic residues. The span at 130 to 148 (SILSGNKGPTSSRQVSSPQ) shows a compositional bias: polar residues. Positions 149–168 (PEKKNNGDRPLDRASRIIKD) are enriched in basic and acidic residues. A Phosphoserine modification is found at Ser-170. The segment covering 230–239 (KNSSADQSSL) has biased composition (polar residues). Residues 253–267 (MKQDSVKKEIDDKGR) are compositionally biased toward basic and acidic residues. The span at 285-294 (GTDDDDDDDV) shows a compositional bias: acidic residues. Phosphothreonine is present on Thr-286. The span at 354–366 (YSTSSKSSPSSGD) shows a compositional bias: low complexity. Interaction with DNA stretches follow at residues 577-578 (KY), 640-645 (RAGNEK), and 731-733 (TAK). The region spanning 584–914 (GSSLKGLSDK…MDVEPEYRFS (331 aa)) is the Topo IB-type catalytic domain. The stretch at 778–860 (QRTVSKTHGA…ERDMHTKEDL (83 aa)) forms a coiled coil. Residue Tyr-872 is the O-(3'-phospho-DNA)-tyrosine intermediate of the active site.

This sequence belongs to the type IB topoisomerase family. In terms of assembly, interacts with DEK3. As to expression, expressed in inflorescence meristems. Expressed in primordia of sepals, petals, stamens, carpels and ovules. Expressed in midstage embryos.

It is found in the nucleus. The catalysed reaction is ATP-independent breakage of single-stranded DNA, followed by passage and rejoining.. Its function is as follows. Releases the supercoiling and torsional tension of DNA introduced during the DNA replication and transcription by transiently cleaving and rejoining one strand of the DNA duplex. Introduces a single-strand break via transesterification at a target site in duplex DNA. The scissile phosphodiester is attacked by the catalytic tyrosine of the enzyme, resulting in the formation of a DNA-(3'-phosphotyrosyl)-enzyme intermediate and the expulsion of a 5'-OH DNA strand. The free DNA strand then rotates around the intact phosphodiester bond on the opposing strand, thus removing DNA supercoils. Finally, in the religation step, the DNA 5'-OH attacks the covalent intermediate to expel the active-site tyrosine and restore the DNA phosphodiester backbone. Can complement a TOP1-deficient yeast mutant. Plays a critical role in the maintenance of a regular pattern of organ initiation. Topoisomerases I enzymes (TOP1A and TOP1B) are essential for plant survival. Functions together with the stem cell maintenance gene WUSCHEL (WUS) in stem cell regulation. Required to maintain developmentally regulated gene repression. Functions synergistically with chromatin remodeling factors. Is required for the repression of WUS expression in flower development. Plays a role in polycomb group (PcG) protein-mediated histone H3 trimethylation on 'Lys-27' (H3K27me3) at the WUS gene locus. H3K27me3 induces transcriptional repression of WUS. May assist AGAMOUS (AG) in recruiting PcG proteins to WUS locus. Reduces nucleosome density, especially at genes that are targets of PcG proteins. Plays a role in epigenetic silencing. Involved in RNA-directed DNA methylation (RdDM) by promoting Pol V transcription to generate long non-coding RNA transcripts. Is dispensable for Pol IV-mediated small interfering RNA (siRNA) biogenesis. Promotes transposable element (TE) silencing at endogenous RdDM target loci through histone H3 dimethylation of 'Lys-9' (H3K9me2). Promotes the production of Pol V-dependent long non-coding transcripts that facilitate the recruitment of siRNA-AGO4 and AGO4 occupancy at TEs. This Arabidopsis thaliana (Mouse-ear cress) protein is DNA topoisomerase 1 alpha.